Consider the following 288-residue polypeptide: L-threonine kinase (288 aa).

ATP is bound at residue 80-90; it reads PIAKGMASSTA.

This sequence belongs to the GHMP kinase family. PduX subfamily.

The protein resides in the cytoplasm. The enzyme catalyses L-threonine + ATP = O-phospho-L-threonine + ADP + H(+). Its pathway is cofactor biosynthesis; adenosylcobalamin biosynthesis. It functions in the pathway polyol metabolism; 1,2-propanediol degradation. In terms of biological role, L-threonine kinase that catalyzes the conversion of L-threonine to L-threonine-O-3-phosphate. Involved in the de novo synthesis of adenosylcobalamin (coenzyme B12) and the assimilation of cobyric acid. Expression of a cosmid containing the full 21-gene pdu operon in E.coli allows E.coli to grow on 1,2-propanediol (1,2-PD) with the appearance of bacterial microcompartments (BMC) in its cytoplasm. Functionally, the 1,2-PD-specific bacterial microcompartment (BMC) concentrates low levels of 1,2-PD catabolic enzymes, concentrates volatile reaction intermediates thus enhancing pathway flux and keeps the level of toxic, mutagenic propionaldehyde low. This gene probably benefits from its induction via the Pdu promoter, rather than a physical interaction with the BMC. This is L-threonine kinase from Citrobacter freundii.